Reading from the N-terminus, the 210-residue chain is Thioredoxin-like 3-1, chloroplastic (210 aa).

A Thioredoxin domain is found at 81–210; sequence WRLKAFWSNI…EVRELINKFV (130 aa). Catalysis depends on nucleophile residues Cys130 and Cys133. A disulfide bridge links Cys130 with Cys133.

It belongs to the thioredoxin family.

It is found in the plastid. It localises to the chloroplast stroma. Functionally, probable thiol-disulfide oxidoreductase that may participate in various redox reactions. In Arabidopsis thaliana (Mouse-ear cress), this protein is Thioredoxin-like 3-1, chloroplastic (WCRKC1).